A 328-amino-acid chain; its full sequence is GMP reductase (328 aa).

C176 (thioimidate intermediate) is an active-site residue. 205-228 serves as a coordination point for NADP(+); that stretch reads IIADGGIRTHGDIAKSIRFGASMI.

The protein belongs to the IMPDH/GMPR family. GuaC type 2 subfamily.

The enzyme catalyses IMP + NH4(+) + NADP(+) = GMP + NADPH + 2 H(+). Catalyzes the irreversible NADPH-dependent deamination of GMP to IMP. It functions in the conversion of nucleobase, nucleoside and nucleotide derivatives of G to A nucleotides, and in maintaining the intracellular balance of A and G nucleotides. The sequence is that of GMP reductase from Streptococcus pneumoniae serotype 4 (strain ATCC BAA-334 / TIGR4).